The chain runs to 266 residues: ATP synthase subunit a (266 aa).

7 consecutive transmembrane segments (helical) span residues 41 to 61, 98 to 118, 119 to 139, 152 to 172, 178 to 198, 216 to 236, and 237 to 257; these read IDTL…FWLA, VIAP…LMDL, VPID…WKIL, LSVL…GGWL, HPLG…EFIA, LVFI…GTPW, and AIFH…LTVV.

This sequence belongs to the ATPase A chain family. In terms of assembly, F-type ATPases have 2 components, CF(1) - the catalytic core - and CF(0) - the membrane proton channel. CF(1) has five subunits: alpha(3), beta(3), gamma(1), delta(1), epsilon(1). CF(0) has three main subunits: a(1), b(2) and c(9-12). The alpha and beta chains form an alternating ring which encloses part of the gamma chain. CF(1) is attached to CF(0) by a central stalk formed by the gamma and epsilon chains, while a peripheral stalk is formed by the delta and b chains.

It is found in the cell inner membrane. Key component of the proton channel; it plays a direct role in the translocation of protons across the membrane. In Halorhodospira halophila (strain DSM 244 / SL1) (Ectothiorhodospira halophila (strain DSM 244 / SL1)), this protein is ATP synthase subunit a.